Here is a 489-residue protein sequence, read N- to C-terminus: uncharacterized protein (489 aa).

Disordered regions lie at residues 1–94 (MIEE…GSLD), 109–229 (NRNQ…SDDD), 300–389 (DDNI…TSIQ), and 428–461 (SESG…TLVK). 2 stretches are compositionally biased toward low complexity: residues 43 to 53 (LLVQQSNQSVK) and 64 to 77 (SNGF…NIHD). Residues 121–138 (NFSEDDEDDDAEDDDSSD) are compositionally biased toward acidic residues. Residues 144–154 (KKNKPKKPSKL) show a composition bias toward basic residues. Positions 155–164 (MKHDSVDGKN) are enriched in basic and acidic residues. A compositionally biased stretch (basic residues) spans 173 to 199 (SKKKVQHQLKEKNKKKGIKNDKKKSKP). The span at 308-343 (NDNDNDNDDDNDNDNDNDNDNDNDNDDDENGEDNGE) shows a compositional bias: acidic residues. Composition is skewed to low complexity over residues 344–389 (DLNI…TSIQ) and 433–449 (SISS…SSKS).

This is an uncharacterized protein from Dictyostelium discoideum (Social amoeba).